Consider the following 1013-residue polypeptide: Chitin synthase A (1013 aa).

Asn-10 carries N-linked (GlcNAc...) asparagine glycosylation. 2 disordered regions span residues 26–83 (RYSY…AADW) and 95–218 (ERAD…RRGV). Residues 64–81 (TASRPASPARPWSPTRAA) are compositionally biased toward low complexity. The span at 154 to 173 (TISSRHGPQGSVQSFTSEST) shows a compositional bias: polar residues. Asn-194 and Asn-316 each carry an N-linked (GlcNAc...) asparagine glycan. Transmembrane regions (helical) follow at residues 646 to 666 (LLQL…FFFI), 686 to 706 (IFIV…IFSM), 721 to 741 (MIVY…LIVL), 759 to 779 (LFVN…FTSF), and 792 to 811 (AQYF…YAFC). N-linked (GlcNAc...) asparagine glycosylation is present at Asn-837. The next 2 helical transmembrane spans lie at 892–912 (VSVW…VYGV) and 919–939 (VYLA…AIGS). N-linked (GlcNAc...) asparagine glycosylation is found at Asn-967, Asn-980, Asn-989, and Asn-995.

The protein belongs to the chitin synthase family. Class II subfamily. In terms of tissue distribution, mainly expressed in the metulae, phialides, and conidia.

It is found in the cell membrane. The protein resides in the cell septum. It carries out the reaction [(1-&gt;4)-N-acetyl-beta-D-glucosaminyl](n) + UDP-N-acetyl-alpha-D-glucosamine = [(1-&gt;4)-N-acetyl-beta-D-glucosaminyl](n+1) + UDP + H(+). Polymerizes chitin, a structural polymer of the cell wall and septum, by transferring the sugar moiety of UDP-GlcNAc to the non-reducing end of the growing chitin polymer. Seems not to be involved in hyphal growth, but, with chsC, chsA shares critical functions in hyphal wall integrity and differentiation. ChsA and chsC share also overlapping roles in septum formation. Invoved in the production of the asexual spores (conidia) that are formed by differentiated aerial hyphae called conidiophores. The sequence is that of Chitin synthase A from Emericella nidulans (strain FGSC A4 / ATCC 38163 / CBS 112.46 / NRRL 194 / M139) (Aspergillus nidulans).